A 507-amino-acid chain; its full sequence is Serine hydroxymethyltransferase (507 aa).

The residue at position 283 (lysine 283) is an N6-(pyridoxal phosphate)lysine.

Belongs to the SHMT family. Homotetramer. Requires pyridoxal 5'-phosphate as cofactor.

The enzyme catalyses (6R)-5,10-methylene-5,6,7,8-tetrahydrofolate + glycine + H2O = (6S)-5,6,7,8-tetrahydrofolate + L-serine. Its pathway is one-carbon metabolism; tetrahydrofolate interconversion. Interconversion of serine and glycine. The chain is Serine hydroxymethyltransferase (mel-32) from Caenorhabditis elegans.